The sequence spans 256 residues: Pimeloyl-[acyl-carrier protein] methyl ester esterase (256 aa).

In terms of domain architecture, AB hydrolase-1 spans 15–242; sequence HLVLLHGWGL…AAHAPFISHP (228 aa). Substrate contacts are provided by residues Trp22, 82–83, and 143–147; these read SL and FLALQ. The Nucleophile role is filled by Ser82. Catalysis depends on residues Asp207 and His235. A substrate-binding site is contributed by His235.

This sequence belongs to the AB hydrolase superfamily. Carboxylesterase BioH family. Monomer.

It localises to the cytoplasm. The catalysed reaction is 6-carboxyhexanoyl-[ACP] methyl ester + H2O = 6-carboxyhexanoyl-[ACP] + methanol + H(+). It participates in cofactor biosynthesis; biotin biosynthesis. The physiological role of BioH is to remove the methyl group introduced by BioC when the pimeloyl moiety is complete. It allows to synthesize pimeloyl-ACP via the fatty acid synthetic pathway through the hydrolysis of the ester bonds of pimeloyl-ACP esters. The chain is Pimeloyl-[acyl-carrier protein] methyl ester esterase from Shigella boydii serotype 4 (strain Sb227).